A 428-amino-acid polypeptide reads, in one-letter code: Phosphoribosylamine--glycine ligase (428 aa).

The 207-residue stretch at 107-313 folds into the ATP-grasp domain; sequence KQVMKTYNIP…LVNVIESLLD (207 aa). 133 to 194 is an ATP binding site; the sequence is VEAEGVPIVI…EEYLEGEELS (62 aa). 2 residues coordinate Mg(2+): Glu283 and Asn285.

The protein belongs to the GARS family. The cofactor is Mg(2+). Mn(2+) serves as cofactor.

It catalyses the reaction 5-phospho-beta-D-ribosylamine + glycine + ATP = N(1)-(5-phospho-beta-D-ribosyl)glycinamide + ADP + phosphate + H(+). It functions in the pathway purine metabolism; IMP biosynthesis via de novo pathway; N(1)-(5-phospho-D-ribosyl)glycinamide from 5-phospho-alpha-D-ribose 1-diphosphate: step 2/2. This Halalkalibacterium halodurans (strain ATCC BAA-125 / DSM 18197 / FERM 7344 / JCM 9153 / C-125) (Bacillus halodurans) protein is Phosphoribosylamine--glycine ligase.